We begin with the raw amino-acid sequence, 298 residues long: ATP phosphoribosyltransferase (298 aa).

It belongs to the ATP phosphoribosyltransferase family.

Its subcellular location is the cytoplasm. It carries out the reaction 1-(5-phospho-beta-D-ribosyl)-ATP + diphosphate = 5-phospho-alpha-D-ribose 1-diphosphate + ATP. Its pathway is amino-acid biosynthesis; L-histidine biosynthesis; L-histidine from 5-phospho-alpha-D-ribose 1-diphosphate: step 1/9. Functionally, catalyzes the condensation of ATP and 5-phosphoribose 1-diphosphate to form N'-(5'-phosphoribosyl)-ATP (PR-ATP). Has a crucial role in the pathway because the rate of histidine biosynthesis seems to be controlled primarily by regulation of the enzymatic activity. The chain is ATP phosphoribosyltransferase (HIS1) from Candida albicans (strain SC5314 / ATCC MYA-2876) (Yeast).